Consider the following 1061-residue polypeptide: Isoleucine--tRNA ligase (1061 aa).

The short motif at 50–60 (PYTSGSAHMGT) is the 'HIGH' region element. Positions 604 to 608 (KMSKS) match the 'KMSKS' region motif. An ATP-binding site is contributed by lysine 607.

This sequence belongs to the class-I aminoacyl-tRNA synthetase family. IleS type 2 subfamily. In terms of assembly, monomer. Zn(2+) is required as a cofactor.

Its subcellular location is the cytoplasm. The catalysed reaction is tRNA(Ile) + L-isoleucine + ATP = L-isoleucyl-tRNA(Ile) + AMP + diphosphate. Catalyzes the attachment of isoleucine to tRNA(Ile). As IleRS can inadvertently accommodate and process structurally similar amino acids such as valine, to avoid such errors it has two additional distinct tRNA(Ile)-dependent editing activities. One activity is designated as 'pretransfer' editing and involves the hydrolysis of activated Val-AMP. The other activity is designated 'posttransfer' editing and involves deacylation of mischarged Val-tRNA(Ile). The polypeptide is Isoleucine--tRNA ligase (Natronomonas pharaonis (strain ATCC 35678 / DSM 2160 / CIP 103997 / JCM 8858 / NBRC 14720 / NCIMB 2260 / Gabara) (Halobacterium pharaonis)).